The sequence spans 385 residues: uncharacterized protein (385 aa).

Lys194 is modified (N6-(pyridoxal phosphate)lysine).

Belongs to the class-V pyridoxal-phosphate-dependent aminotransferase family. Pyridoxal 5'-phosphate serves as cofactor.

This is an uncharacterized protein from Methanocaldococcus jannaschii (strain ATCC 43067 / DSM 2661 / JAL-1 / JCM 10045 / NBRC 100440) (Methanococcus jannaschii).